A 258-amino-acid chain; its full sequence is Proteasome subunit alpha (258 aa).

Belongs to the peptidase T1A family. The 20S proteasome core is composed of 14 alpha and 14 beta subunits that assemble into four stacked heptameric rings, resulting in a barrel-shaped structure. The two inner rings, each composed of seven catalytic beta subunits, are sandwiched by two outer rings, each composed of seven alpha subunits. The catalytic chamber with the active sites is on the inside of the barrel. Has a gated structure, the ends of the cylinder being occluded by the N-termini of the alpha-subunits. Is capped by the proteasome-associated ATPase, ARC.

The protein resides in the cytoplasm. The protein operates within protein degradation; proteasomal Pup-dependent pathway. The formation of the proteasomal ATPase ARC-20S proteasome complex, likely via the docking of the C-termini of ARC into the intersubunit pockets in the alpha-rings, may trigger opening of the gate for substrate entry. Interconversion between the open-gate and close-gate conformations leads to a dynamic regulation of the 20S proteasome proteolysis activity. Its function is as follows. Component of the proteasome core, a large protease complex with broad specificity involved in protein degradation. This is Proteasome subunit alpha from Nocardia farcinica (strain IFM 10152).